Consider the following 158-residue polypeptide: SsrA-binding protein (158 aa).

The segment at 134-158 (KLHDKRETEKERDWNRQKSRLLKTG) is disordered. Residues 137 to 149 (DKRETEKERDWNR) show a composition bias toward basic and acidic residues.

Belongs to the SmpB family.

It localises to the cytoplasm. Functionally, required for rescue of stalled ribosomes mediated by trans-translation. Binds to transfer-messenger RNA (tmRNA), required for stable association of tmRNA with ribosomes. tmRNA and SmpB together mimic tRNA shape, replacing the anticodon stem-loop with SmpB. tmRNA is encoded by the ssrA gene; the 2 termini fold to resemble tRNA(Ala) and it encodes a 'tag peptide', a short internal open reading frame. During trans-translation Ala-aminoacylated tmRNA acts like a tRNA, entering the A-site of stalled ribosomes, displacing the stalled mRNA. The ribosome then switches to translate the ORF on the tmRNA; the nascent peptide is terminated with the 'tag peptide' encoded by the tmRNA and targeted for degradation. The ribosome is freed to recommence translation, which seems to be the essential function of trans-translation. The chain is SsrA-binding protein from Allorhizobium ampelinum (strain ATCC BAA-846 / DSM 112012 / S4) (Agrobacterium vitis (strain S4)).